The primary structure comprises 296 residues: Protein csh3 (296 aa).

Positions 46–138 (ASPVTAPAAQ…PPSYPGPNTA (93 aa)) are disordered. Positions 93–103 (GEKRTPEEPRK) are enriched in basic and acidic residues. The span at 111 to 124 (QKQSEASSVNSSTE) shows a compositional bias: polar residues. An SH3 domain is found at 140 to 199 (KNVERVLAMYDFPGPDAGDLGFHAGEVIIVLEHVNNDWWRGELNGKEGIFPSNYVRLLED). The interval 202-246 (VKAQPPPPPPQQNYPPAASSSAPPMQYQQTAYPPQQAPYPPVQAY) is disordered. Over residues 205–214 (QPPPPPPQQN) the composition is skewed to pro residues. The segment covering 215–235 (YPPAASSSAPPMQYQQTAYPP) has biased composition (low complexity).

The protein is Protein csh3 (csh3) of Schizosaccharomyces pombe (strain 972 / ATCC 24843) (Fission yeast).